Reading from the N-terminus, the 762-residue chain is ABC-type oligopeptide transporter ABCB9 (762 aa).

The next 8 membrane-spanning stretches (helical) occupy residues 7–27 (VVVTLAFVSTDVGVTTAIYAF), 47–67 (VLDLWAACLYRSCLLLGATIG), 84–104 (LVITLVCLFVGIYAMAKLLLF), 116–136 (FWALFVWTYISLAASFLLWGL), 181–201 (VAFLVAASFFLIVAALGETFL), 221–241 (FTTAVVVVCLLAIGSSLAAGI), 315–335 (VFMFSLSWQLSLVTFMGFPII), and 412–432 (SGLTLLVVQVSILYYGGHLVI). The 284-residue stretch at 184-467 (LVAASFFLIV…VGSVYSGLMQ (284 aa)) folds into the ABC transmembrane type-1 domain. Residues 500–736 (VDFENVTFTY…GGLYAKLVQR (237 aa)) enclose the ABC transporter domain. 535 to 542 (GPSGSGKS) serves as a coordination point for ATP.

The protein belongs to the ABC transporter superfamily. ABCB family. MHC peptide exporter (TC 3.A.1.209) subfamily. As to quaternary structure, homodimer. Interacts (via TMD0 region) with LAMP1; this interaction strongly stabilizes ABCB9 and protects ABCB9 against lysosomal degradation. Interacts (via TMD0 region) with LAMP2 (isoform LAMP-2B). Interacts (via TMD0) with YIF1B; this interaction allows (but is not essential) the ER-to-Golgi trafficking and strongly depends on a salt bridge within TMD0. As to expression, highly expressed in testis, particularly in the Sertoli cells of the seminiferous tubules, and at moderate levels in brain and spinal cord.

The protein localises to the lysosome membrane. The enzyme catalyses a [oligopeptide](in) + ATP + H2O = a [oligopeptide](out) + ADP + phosphate + H(+). Functionally, ATP-dependent low-affinity peptide transporter which translocates a broad spectrum of peptides from the cytosol to the lysosomal lumen for degradation. Displays a broad peptide length specificity from 6-mer up to at least 59-mer peptides with an optimum of 23-mers. Binds and transports smaller and larger peptides with the same affinity. Favors positively charged, aromatic or hydrophobic residues in the N- and C-terminal positions whereas negatively charged residues as well as asparagine and methionine are not favored. The chain is ABC-type oligopeptide transporter ABCB9 from Mus musculus (Mouse).